Consider the following 159-residue polypeptide: NAD(P)H-quinone oxidoreductase subunit J, chloroplastic (159 aa).

This sequence belongs to the complex I 30 kDa subunit family. NDH is composed of at least 16 different subunits, 5 of which are encoded in the nucleus. As to expression, leaves.

The protein localises to the plastid. It localises to the chloroplast thylakoid membrane. The enzyme catalyses a plastoquinone + NADH + (n+1) H(+)(in) = a plastoquinol + NAD(+) + n H(+)(out). The catalysed reaction is a plastoquinone + NADPH + (n+1) H(+)(in) = a plastoquinol + NADP(+) + n H(+)(out). In terms of biological role, NDH shuttles electrons from NAD(P)H:plastoquinone, via FMN and iron-sulfur (Fe-S) centers, to quinones in the photosynthetic chain and possibly in a chloroplast respiratory chain. The immediate electron acceptor for the enzyme in this species is believed to be plastoquinone. Couples the redox reaction to proton translocation, and thus conserves the redox energy in a proton gradient. The polypeptide is NAD(P)H-quinone oxidoreductase subunit J, chloroplastic (Zea mays (Maize)).